Here is a 161-residue protein sequence, read N- to C-terminus: 2-C-methyl-D-erythritol 2,4-cyclodiphosphate synthase (161 aa).

The a divalent metal cation site is built by Asp-9 and His-11. 4-CDP-2-C-methyl-D-erythritol 2-phosphate contacts are provided by residues 9–11 (DFH) and 37–38 (HS). Position 45 (His-45) interacts with a divalent metal cation. Residues 59 to 61 (DIG), 64 to 68 (FPDTD), 135 to 138 (TTTE), and Arg-145 each bind 4-CDP-2-C-methyl-D-erythritol 2-phosphate.

It belongs to the IspF family. As to quaternary structure, homotrimer. It depends on a divalent metal cation as a cofactor.

It carries out the reaction 4-CDP-2-C-methyl-D-erythritol 2-phosphate = 2-C-methyl-D-erythritol 2,4-cyclic diphosphate + CMP. Its pathway is isoprenoid biosynthesis; isopentenyl diphosphate biosynthesis via DXP pathway; isopentenyl diphosphate from 1-deoxy-D-xylulose 5-phosphate: step 4/6. Its function is as follows. Involved in the biosynthesis of isopentenyl diphosphate (IPP) and dimethylallyl diphosphate (DMAPP), two major building blocks of isoprenoid compounds. Catalyzes the conversion of 4-diphosphocytidyl-2-C-methyl-D-erythritol 2-phosphate (CDP-ME2P) to 2-C-methyl-D-erythritol 2,4-cyclodiphosphate (ME-CPP) with a corresponding release of cytidine 5-monophosphate (CMP). This Leptospira borgpetersenii serovar Hardjo-bovis (strain JB197) protein is 2-C-methyl-D-erythritol 2,4-cyclodiphosphate synthase.